Consider the following 196-residue polypeptide: SPRY domain-containing protein 7 (196 aa).

The residue at position 2 (Ala2) is an N-acetylalanine. The region spanning 2–184 (AASAWCCLRC…FSEFYHTPPP (183 aa)) is the B30.2/SPRY domain.

In Mus musculus (Mouse), this protein is SPRY domain-containing protein 7 (Spryd7).